We begin with the raw amino-acid sequence, 28 residues long: Conotoxin de7b (28 aa).

Intrachain disulfides connect Cys-2–Cys-18, Cys-9–Cys-22, and Cys-17–Cys-27. Residue Pro-4 is modified to 4-hydroxyproline; partial. Position 7 is a 4-carboxyglutamate; partial (Glu-7). 4-hydroxyproline; partial is present on Pro-14.

In terms of tissue distribution, expressed by the venom duct.

Its subcellular location is the secreted. Its function is as follows. May inhibit sodium (Nav) or calcium channels (Cav). This Conasprella delessertii (Sozon's cone) protein is Conotoxin de7b.